The primary structure comprises 210 residues: Floral homeotic protein FBP1 (210 aa).

Residues 3–57 form the MADS-box domain; sequence RGKIEIKRIENSSNRQVTYSKRRNGILKKAKEISVLCDARVSVIIFASSGKMHEF. Residues 82 to 173 form the K-box domain; the sequence is HENLDNEINK…QLEIATMNRN (92 aa).

In terms of tissue distribution, petals.

The protein resides in the nucleus. In terms of biological role, probable transcription factor. In Petunia hybrida (Petunia), this protein is Floral homeotic protein FBP1 (FBP1).